The sequence spans 32 residues: SGNVAEAPKHYHCSYEDADIVMREWYHVWGSG.

It belongs to the globin family. Giant hemoglobin is composed of four heme-containing chains (AI to AIV), and two linker chains (AV and AVI).

This Lamellibrachia sp. (Deep-sea giant tube worm) protein is Giant hemoglobin AIV chain.